Here is a 279-residue protein sequence, read N- to C-terminus: Troponin T, fast skeletal muscle (279 aa).

Positions 1-21 are enriched in acidic residues; sequence MSDEEVEHVEEQYEEEEEAQE. The tract at residues 1–82 is disordered; sequence MSDEEVEHVE…EKVDFDDIQK (82 aa). An N-acetylserine modification is found at serine 2. Residue serine 2 is modified to Phosphoserine. 2 stretches are compositionally biased toward basic and acidic residues: residues 28–49 and 70–82; these read EVHE…ALED and PEGE…DIQK. Serine 98 is subject to Phosphoserine. The segment covering 121-163 has biased composition (basic and acidic residues); it reads RAERAEQQRIRAEKERERQNRLAEEKARREEEDAKRRAEEDLK. Positions 121-200 are disordered; sequence RAERAEQQRI…TAREMKKKIL (80 aa). Phosphoserine occurs at positions 169, 176, and 177. The segment covering 191–200 has biased composition (basic and acidic residues); it reads TAREMKKKIL. Serine 213 bears the Phosphoserine mark. The residue at position 229 (tyrosine 229) is a Phosphotyrosine.

The protein belongs to the troponin T family.

Functionally, troponin T is the tropomyosin-binding subunit of troponin, the thin filament regulatory complex which confers calcium-sensitivity to striated muscle actomyosin ATPase activity. This Oryctolagus cuniculus (Rabbit) protein is Troponin T, fast skeletal muscle (TNNT3).